Consider the following 813-residue polypeptide: Leucine--tRNA ligase (813 aa).

The 'HIGH' region signature appears at 42–52 (PYTSGNLHIGH). The 'KMSKS' region motif lies at 580 to 584 (KMSKS). Lys-583 lines the ATP pocket.

The protein belongs to the class-I aminoacyl-tRNA synthetase family.

It is found in the cytoplasm. The enzyme catalyses tRNA(Leu) + L-leucine + ATP = L-leucyl-tRNA(Leu) + AMP + diphosphate. This Dehalococcoides mccartyi (strain ATCC BAA-2266 / KCTC 15142 / 195) (Dehalococcoides ethenogenes (strain 195)) protein is Leucine--tRNA ligase.